A 550-amino-acid polypeptide reads, in one-letter code: uncharacterized protein (550 aa).

An N-terminal signal peptide occupies residues 1-53 (MVVIANKGALWAYYCKRLLNSVTYMMYPLIRKRTMKKLLLIVGLLLACSTVMR). Residues Asn-296 and Asn-518 are each glycosylated (N-linked (GlcNAc...) asparagine).

The protein resides in the endoplasmic reticulum. This is an uncharacterized protein from Schizosaccharomyces pombe (strain 972 / ATCC 24843) (Fission yeast).